The primary structure comprises 487 residues: 3-octaprenyl-4-hydroxybenzoate carboxy-lyase (487 aa).

A Mn(2+)-binding site is contributed by N172. Prenylated FMN is bound by residues 175-177 (IYR), 189-191 (RWL), and 194-195 (RG). A Mn(2+)-binding site is contributed by E238. The Proton donor role is filled by D287.

Belongs to the UbiD family. Homohexamer. Prenylated FMN serves as cofactor. It depends on Mn(2+) as a cofactor.

It is found in the cell membrane. The catalysed reaction is a 4-hydroxy-3-(all-trans-polyprenyl)benzoate + H(+) = a 2-(all-trans-polyprenyl)phenol + CO2. It functions in the pathway cofactor biosynthesis; ubiquinone biosynthesis. Its function is as follows. Catalyzes the decarboxylation of 3-octaprenyl-4-hydroxy benzoate to 2-octaprenylphenol, an intermediate step in ubiquinone biosynthesis. The protein is 3-octaprenyl-4-hydroxybenzoate carboxy-lyase of Actinobacillus pleuropneumoniae serotype 7 (strain AP76).